Here is a 490-residue protein sequence, read N- to C-terminus: Metal cation symporter ZIP14 (490 aa).

Positions 1-28 (MKLLHPAFQSCLLLTLLGLWRTTPEAHA) are cleaved as a signal peptide. The Extracellular segment spans residues 29–155 (SSPGAPAISA…PSAVEVWGYG (127 aa)). N-linked (GlcNAc...) asparagine glycosylation is found at Asn-75, Asn-85, and Asn-100. A helical membrane pass occupies residues 156–176 (LLCVTVISLCSLLGASVVPFM). Residues 177 to 184 (KKTFYKRL) lie on the Cytoplasmic side of the membrane. Residues 185–205 (LLYFIALAIGTLYSNALFQLI) traverse the membrane as a helical segment. Topologically, residues 206–222 (PEAFGFNPLEDYYVSKS) are extracellular. A helical membrane pass occupies residues 223–243 (AVVFGGFYLFFFTEKILKILL). Over 244–395 (KQKNEHHHGH…LLNAGMSIQQ (152 aa)) the chain is Cytoplasmic. Positions 249 to 256 (HHHGHSHY) match the HHHGHXHX-motif motif. The XEXPHE-motif signature appears at 374–379 (EEFPHE). Residues 396–416 (ALFFNFLSACCCYLGLAFGIL) traverse the membrane as a helical segment. The Extracellular portion of the chain corresponds to 417–422 (AGSHFS). A helical membrane pass occupies residues 423-443 (ANWIFALAGGMFLYISLADMF). At 444–458 (PEMNEVCQEDERKGS) the chain is on the cytoplasmic side. Residues 459 to 479 (ILIPFVIQNLGLLTGFTIMVV) form a helical membrane-spanning segment. The Extracellular segment spans residues 480-490 (LTMYSGQIQIG).

The protein belongs to the ZIP transporter (TC 2.A.5) family. In terms of assembly, homotrimer. In terms of processing, ubiquitinated. Ubiquitination occurs upon iron depletion. The ubiquitinated form undergoes proteasomal degradation. Post-translationally, N-glycosylated. N-glycosylation at Asn-100 is required for iron-regulated extraction of the transporter from membranes and subsequent proteasomal degradation.

It is found in the cell membrane. The protein resides in the apical cell membrane. The protein localises to the basolateral cell membrane. Its subcellular location is the early endosome membrane. It localises to the late endosome membrane. It is found in the lysosome membrane. It carries out the reaction Zn(2+)(out) + 2 hydrogencarbonate(out) = Zn(2+)(in) + 2 hydrogencarbonate(in). It catalyses the reaction Mn(2+)(out) + 2 hydrogencarbonate(out) = Mn(2+)(in) + 2 hydrogencarbonate(in). The enzyme catalyses Fe(2+)(out) + 2 hydrogencarbonate(out) = Fe(2+)(in) + 2 hydrogencarbonate(in). The catalysed reaction is Cd(2+)(out) + 2 hydrogencarbonate(out) = Cd(2+)(in) + 2 hydrogencarbonate(in). Functionally, electroneutral transporter of the plasma membrane mediating the cellular uptake of the divalent metal cations zinc, manganese and iron that are important for tissue homeostasis, metabolism, development and immunity. Functions as an energy-dependent symporter, transporting through the membranes an electroneutral complex composed of a divalent metal cation and two bicarbonate anions. Beside these endogenous cellular substrates, can also import cadmium a non-essential metal which is cytotoxic and carcinogenic. Controls the cellular uptake by the intestinal epithelium of systemic zinc, which is in turn required to maintain tight junctions and the intestinal permeability. Modifies the activity of zinc-dependent phosphodiesterases, thereby indirectly regulating G protein-coupled receptor signaling pathways important for gluconeogenesis and chondrocyte differentiation. Regulates insulin receptor signaling, glucose uptake, glycogen synthesis and gluconeogenesis in hepatocytes through the zinc-dependent intracellular catabolism of insulin. Through zinc cellular uptake also plays a role in the adaptation of cells to endoplasmic reticulum stress. Major manganese transporter of the basolateral membrane of intestinal epithelial cells, it plays a central role in manganese systemic homeostasis through intestinal manganese uptake. Also involved in manganese extracellular uptake by cells of the blood-brain barrier. May also play a role in manganese and zinc homeostasis participating in their elimination from the blood through the hepatobiliary excretion. Also functions in the extracellular uptake of free iron. May also function intracellularly and mediate the transport from endosomes to cytosol of iron endocytosed by transferrin. Plays a role in innate immunity by regulating the expression of cytokines by activated macrophages. This is Metal cation symporter ZIP14 from Pongo abelii (Sumatran orangutan).